A 328-amino-acid polypeptide reads, in one-letter code: uncharacterized protein (328 aa).

The signal sequence occupies residues 1 to 32; it reads MFNFRLFSRRGKSLGLLAIVLLLFGFYSLKSS.

It belongs to the glycosyltransferase 34 family.

The protein resides in the endoplasmic reticulum. This is an uncharacterized protein from Schizosaccharomyces pombe (strain 972 / ATCC 24843) (Fission yeast).